A 721-amino-acid polypeptide reads, in one-letter code: MSATDLASVQAAAPQGSRQILVTSALPYANGQIHIGHLVEYIQTDIWVRTLRMHGHEVYYIGADDTHGTPIMLRAEMEGLTPKQLIDRVWAEHKRDFDSFGVSFDNFYSTDSDENRVLSEKIYVALKENGLIAEREIEQAYDPVKEMFLPDRFIKGECPKCHAKDQYGDSCEVCGSTYLPTDLLNPYSVVSGATPVRKTSTHHFFRLSDPRCESFLRDWVSGLAQPEATNKMREWLGDAGEAKLADWDISRDAPYFGFEIPGAPGKYFYVWLDAPVGYYASFKNLCERKGINFDAWVRPGATAEQYHFIGKDILYFHTLFWPAMLEFSGHRTPTNVFAHGFLTVDGAKMSKSRGTFITAQSYIDTGLNPEWLRYYFAAKLNATMEDIDLNLDDFQARVNSDLVGKYVNIASRAAGFLIKRFDGRVQDSAMNHPLVAKLRSAIDSIAAHYEAREYSRALRQTMELADEVNAYVDGAKPWELAKDPANAVALHETCSVSLEAFRLLSLALKPVMPRVAQAVEAFFGIAPLAWADAAKPLSSAQPINAYQHLMTRVDAKQIDALLAANRGSLQADGAAAAAASGATGAAAAKDAKPAKANAKAAAANAANDGPISIDDFAKIDLRIAKIVACQAVEGSDKLLQLTLDVGEEKTRNVFSGIKSAYQPEQLVGKLTVMVANLAPRKMKFGLSEGMVLAASAADEKAEPGLYILEPHSGAKPGMRVK.

A 'HIGH' region motif is present at residues 27–37 (PYANGQIHIGH). Residues Cys158, Cys161, Cys171, and Cys174 each contribute to the Zn(2+) site. The short motif at 348 to 352 (KMSKS) is the 'KMSKS' region element. Position 351 (Lys351) interacts with ATP. A tRNA-binding domain is found at 615-721 (DFAKIDLRIA…SGAKPGMRVK (107 aa)).

This sequence belongs to the class-I aminoacyl-tRNA synthetase family. MetG type 1 subfamily. Homodimer. The cofactor is Zn(2+).

It localises to the cytoplasm. The enzyme catalyses tRNA(Met) + L-methionine + ATP = L-methionyl-tRNA(Met) + AMP + diphosphate. In terms of biological role, is required not only for elongation of protein synthesis but also for the initiation of all mRNA translation through initiator tRNA(fMet) aminoacylation. The chain is Methionine--tRNA ligase from Burkholderia vietnamiensis (strain G4 / LMG 22486) (Burkholderia cepacia (strain R1808)).